The chain runs to 494 residues: Aspartyl/glutamyl-tRNA(Asn/Gln) amidotransferase subunit B (494 aa).

Belongs to the GatB/GatE family. GatB subfamily. Heterotrimer of A, B and C subunits.

It carries out the reaction L-glutamyl-tRNA(Gln) + L-glutamine + ATP + H2O = L-glutaminyl-tRNA(Gln) + L-glutamate + ADP + phosphate + H(+). The catalysed reaction is L-aspartyl-tRNA(Asn) + L-glutamine + ATP + H2O = L-asparaginyl-tRNA(Asn) + L-glutamate + ADP + phosphate + 2 H(+). Allows the formation of correctly charged Asn-tRNA(Asn) or Gln-tRNA(Gln) through the transamidation of misacylated Asp-tRNA(Asn) or Glu-tRNA(Gln) in organisms which lack either or both of asparaginyl-tRNA or glutaminyl-tRNA synthetases. The reaction takes place in the presence of glutamine and ATP through an activated phospho-Asp-tRNA(Asn) or phospho-Glu-tRNA(Gln). The polypeptide is Aspartyl/glutamyl-tRNA(Asn/Gln) amidotransferase subunit B (Synechococcus elongatus (strain ATCC 33912 / PCC 7942 / FACHB-805) (Anacystis nidulans R2)).